A 247-amino-acid chain; its full sequence is Peroxisomal membrane protein 11A (247 aa).

The Cytoplasmic segment spans residues 1 to 83 (MDAFIRFTNQ…SVRATDLVPR (83 aa)). Residues 84 to 105 (ICLTLASLNRVIYFICDTVLFV) form a helical membrane-spanning segment. Residues 106-219 (RSTGLASGVN…DQLGIYKSNP (114 aa)) are Lumenal-facing. The chain crosses the membrane as a helical span at residues 220 to 239 (GIIGLGGLVSSVAGIITVAY). Residues 220–239 (GIIGLGGLVSSVAGIITVAY) are required for homodimerization, interaction with PEX11G, and peroxisomal localization. Over 240–247 (PQMKLKTQ) the chain is Cytoplasmic.

This sequence belongs to the peroxin-11 family. In terms of assembly, homodimer. Heterodimer with PEX11G. Probably interacts with COPB2 and COPA. Interacts with PEX19. Interacts with FIS1.

The protein resides in the peroxisome membrane. Its function is as follows. May be involved in peroxisomal proliferation and may regulate peroxisomes division. May mediate binding of coatomer proteins to the peroxisomal membrane. Promotes membrane protrusion and elongation on the peroxisomal surface. This is Peroxisomal membrane protein 11A (PEX11A) from Bos taurus (Bovine).